Here is a 477-residue protein sequence, read N- to C-terminus: UDP-N-acetylmuramate--L-alanine ligase (477 aa).

An ATP-binding site is contributed by 122-128; sequence GTHGKTT.

This sequence belongs to the MurCDEF family.

It localises to the cytoplasm. The enzyme catalyses UDP-N-acetyl-alpha-D-muramate + L-alanine + ATP = UDP-N-acetyl-alpha-D-muramoyl-L-alanine + ADP + phosphate + H(+). The protein operates within cell wall biogenesis; peptidoglycan biosynthesis. Functionally, cell wall formation. This chain is UDP-N-acetylmuramate--L-alanine ligase, found in Xanthomonas axonopodis pv. citri (strain 306).